Reading from the N-terminus, the 354-residue chain is MALLRALLGLLACTPRPSAAYFGLTGNEALTILPLTSEMEEAAVKAHYKVCDRLKLEKKQRRMCRRDPGGAETLMEAISMSALECQYQFRFERWNCTLEGRYRASLLKRGFKETAFLYAISSAGLTHAMAKACSAGRMERCTCDEAPDLENREAWQWGGCGDNLKYSNKFVKEFLGRKPNKDLRARVDFHNNLVGMKVIKAGVETTCKCHGVSGSCTVRTCWRQLSPFHEIGKQLKQKYETSLKVGSTTNEATGEGDISPPKKSIPGHSDQIPRTTDLVYIDDSPSFCLMSRYSPGTSGRKCYKDKNCDSICCGRGHNTQSRVVTRPCQCQVRWCCYVECKQCTQREEVYTCKD.

Positions 1–15 are cleaved as a signal peptide; the sequence is MALLRALLGLLACTP. 5 cysteine pairs are disulfide-bonded: Cys-85–Cys-96, Cys-133–Cys-141, Cys-143–Cys-160, Cys-207–Cys-221, and Cys-209–Cys-216. An N-linked (GlcNAc...) asparagine glycan is attached at Asn-95. Ser-213 carries the O-palmitoleoyl serine; by PORCN lipid modification. The tract at residues 246-271 is disordered; sequence GSTTNEATGEGDISPPKKSIPGHSDQ. Intrachain disulfides connect Cys-288-Cys-313, Cys-302-Cys-308, Cys-312-Cys-352, Cys-328-Cys-343, Cys-330-Cys-340, and Cys-335-Cys-336.

Belongs to the Wnt family. Palmitoleoylation is required for efficient binding to frizzled receptors. Depalmitoleoylation leads to Wnt signaling pathway inhibition.

Its subcellular location is the secreted. It is found in the extracellular space. It localises to the extracellular matrix. Ligand for members of the frizzled family of seven transmembrane receptors. Functions in the canonical Wnt/beta-catenin signaling pathway. Plays a role in embryonic chondrocyte maturation and in embryonic bone mineralization. The protein is Protein Wnt-9a (WNT9A) of Gallus gallus (Chicken).